Reading from the N-terminus, the 516-residue chain is Histidine ammonia-lyase 1 (516 aa).

Residues 147–149 (SSG) constitute a cross-link (5-imidazolinone (Ser-Gly)). Residue Ser148 is modified to 2,3-didehydroalanine (Ser).

This sequence belongs to the PAL/histidase family. Contains an active site 4-methylidene-imidazol-5-one (MIO), which is formed autocatalytically by cyclization and dehydration of residues Ser-Ser-Gly.

The protein localises to the cytoplasm. The enzyme catalyses L-histidine = trans-urocanate + NH4(+). It functions in the pathway amino-acid degradation; L-histidine degradation into L-glutamate; N-formimidoyl-L-glutamate from L-histidine: step 1/3. The protein is Histidine ammonia-lyase 1 (hutH1) of Fusobacterium nucleatum subsp. nucleatum (strain ATCC 25586 / DSM 15643 / BCRC 10681 / CIP 101130 / JCM 8532 / KCTC 2640 / LMG 13131 / VPI 4355).